We begin with the raw amino-acid sequence, 254 residues long: Alcohol dehydrogenase 2 (254 aa).

Residue Phe-10–Leu-33 participates in NAD(+) binding. Ser-138 is a substrate binding site. Residue Tyr-151 is the Proton acceptor of the active site.

This sequence belongs to the short-chain dehydrogenases/reductases (SDR) family. In terms of assembly, homodimer.

It catalyses the reaction a primary alcohol + NAD(+) = an aldehyde + NADH + H(+). The catalysed reaction is a secondary alcohol + NAD(+) = a ketone + NADH + H(+). This Drosophila wheeleri (Fruit fly) protein is Alcohol dehydrogenase 2 (Adh2).